We begin with the raw amino-acid sequence, 100 residues long: UPF0235 protein Cvib_0403 (100 aa).

This sequence belongs to the UPF0235 family.

This chain is UPF0235 protein Cvib_0403, found in Chlorobium phaeovibrioides (strain DSM 265 / 1930) (Prosthecochloris vibrioformis (strain DSM 265)).